A 185-amino-acid polypeptide reads, in one-letter code: Ribosome-recycling factor (185 aa).

The protein belongs to the RRF family.

It is found in the cytoplasm. Its function is as follows. Responsible for the release of ribosomes from messenger RNA at the termination of protein biosynthesis. May increase the efficiency of translation by recycling ribosomes from one round of translation to another. The protein is Ribosome-recycling factor of Brevibacillus brevis (strain 47 / JCM 6285 / NBRC 100599).